We begin with the raw amino-acid sequence, 347 residues long: Ataxin-7-like protein 3 (347 aa).

Residues Cys-84–Cys-105 form an SGF11-type zinc finger. Low complexity predominate over residues Ala-116–Asn-125. Positions Ala-116–Lys-184 are disordered. 2 positions are modified to phosphoserine: Ser-129 and Ser-131. Residues Asp-132 to Asp-141 show a composition bias toward acidic residues. Residues Leu-196–Thr-263 enclose the SCA7 domain. The span at Asp-275–Ser-288 shows a compositional bias: low complexity. Residues Asp-275–Asn-347 form a disordered region. A phosphoserine mark is found at Ser-278, Ser-281, and Ser-326.

It belongs to the SGF11 family. As to quaternary structure, component of some SAGA transcription coactivator-HAT complexes, at least composed of ATXN7, ATXN7L3, ENY2, GCN5L2, SUPT3H, TAF10, TRRAP and USP22. Within the SAGA complex, ENY2, ATXN7, ATXN7L3, and USP22 form an additional subcomplex of SAGA called the DUB module (deubiquitination module). Interacts directly with ENY2 and USP22.

The protein localises to the nucleus. Component of the transcription regulatory histone acetylation (HAT) complex SAGA, a multiprotein complex that activates transcription by remodeling chromatin and mediating histone acetylation and deubiquitination. Within the SAGA complex, participates in a subcomplex that specifically deubiquitinates both histones H2A and H2B. The SAGA complex is recruited to specific gene promoters by activators such as MYC, where it is required for transcription. Required for nuclear receptor-mediated transactivation. Within the complex, it is required to recruit USP22 and ENY2 into the SAGA complex. Regulates H2B monoubiquitination (H2Bub1) levels. Affects subcellular distribution of ENY2, USP22 and ATXN7L3B. This chain is Ataxin-7-like protein 3, found in Homo sapiens (Human).